We begin with the raw amino-acid sequence, 304 residues long: UDP-N-acetylenolpyruvoylglucosamine reductase (304 aa).

An FAD-binding PCMH-type domain is found at 33–198 (KVGGPVDILL…LRATFNLVNG (166 aa)). R177 is a catalytic residue. S227 (proton donor) is an active-site residue. E297 is an active-site residue.

It belongs to the MurB family. FAD is required as a cofactor.

Its subcellular location is the cytoplasm. The catalysed reaction is UDP-N-acetyl-alpha-D-muramate + NADP(+) = UDP-N-acetyl-3-O-(1-carboxyvinyl)-alpha-D-glucosamine + NADPH + H(+). Its pathway is cell wall biogenesis; peptidoglycan biosynthesis. Cell wall formation. The protein is UDP-N-acetylenolpyruvoylglucosamine reductase of Clostridium beijerinckii (strain ATCC 51743 / NCIMB 8052) (Clostridium acetobutylicum).